The sequence spans 80 residues: Acyl carrier protein (80 aa).

The Carrier domain maps to 2 to 77 (KNIEERIKKI…KSIDFIQKKN (76 aa)). At serine 37 the chain carries O-(pantetheine 4'-phosphoryl)serine.

The protein belongs to the acyl carrier protein (ACP) family. In terms of processing, 4'-phosphopantetheine is transferred from CoA to a specific serine of apo-ACP by AcpS. This modification is essential for activity because fatty acids are bound in thioester linkage to the sulfhydryl of the prosthetic group.

It localises to the cytoplasm. The protein operates within lipid metabolism; fatty acid biosynthesis. Its function is as follows. Carrier of the growing fatty acid chain in fatty acid biosynthesis. The protein is Acyl carrier protein of Buchnera aphidicola subsp. Acyrthosiphon pisum (strain APS) (Acyrthosiphon pisum symbiotic bacterium).